Here is a 95-residue protein sequence, read N- to C-terminus: Secretoglobin family 2A member 1 (95 aa).

The first 18 residues, Met-1–Ala-18, serve as a signal peptide directing secretion. 2 N-linked (GlcNAc...) asparagine glycosylation sites follow: Asn-35 and Asn-72.

This sequence belongs to the secretoglobin family. Lipophilin subfamily. Prostatein is composed of three different peptides called C1, C2 and C3. These form covalent C1:C3 (F) and C2:C3 (S) heterodimers whose non-covalent association forms tetrameric (C1:C3/C3:C2) prostatein molecules. As to expression, expressed at very low level in ventral prostate.

The protein resides in the secreted. Part of prostatein which is the major secretory glycoprotein of ventral prostate gland. Steroid-binding protein; can bind non-polar steroids, cholesterol and a group of small proline-rich peptides. In Rattus norvegicus (Rat), this protein is Secretoglobin family 2A member 1.